The following is a 154-amino-acid chain: Prefoldin subunit 5 (154 aa).

At Ala-2 the chain carries N-acetylalanine. Lys-42 carries the post-translational modification N6-acetyllysine. Ser-56 bears the Phosphoserine mark.

The protein belongs to the prefoldin subunit alpha family. As to quaternary structure, heterohexamer of two PFD-alpha type and four PFD-beta type subunits.

The protein localises to the nucleus. Functionally, binds specifically to cytosolic chaperonin (c-CPN) and transfers target proteins to it. Binds to nascent polypeptide chain and promotes folding in an environment in which there are many competing pathways for nonnative proteins. Represses the transcriptional activity of MYC. The polypeptide is Prefoldin subunit 5 (Pfdn5) (Mus musculus (Mouse)).